A 156-amino-acid polypeptide reads, in one-letter code: Succinate dehydrogenase assembly factor 2-B, mitochondrial (156 aa).

A mitochondrion-targeting transit peptide spans 1-24 (MLRQFIVSTVGRRLQLPMMAQSRL).

This sequence belongs to the SDHAF2 family. In terms of assembly, interacts with the flavoprotein subunit within the SDH catalytic dimer.

It is found in the mitochondrion matrix. In terms of biological role, plays an essential role in the assembly of succinate dehydrogenase (SDH), an enzyme complex (also referred to as respiratory complex II) that is a component of both the tricarboxylic acid (TCA) cycle and the mitochondrial electron transport chain, and which couples the oxidation of succinate to fumarate with the reduction of ubiquinone (coenzyme Q) to ubiquinol. Required for flavinylation (covalent attachment of FAD) of the flavoprotein subunit of the SDH catalytic dimer. This chain is Succinate dehydrogenase assembly factor 2-B, mitochondrial, found in Drosophila simulans (Fruit fly).